Reading from the N-terminus, the 88-residue chain is Putative defensin-like protein 228 (88 aa).

The N-terminal stretch at 1–27 (MMKSAILLMVSCVFMFLVVSYIQDVEG) is a signal peptide. Intrachain disulfides connect Cys-32-Cys-88, Cys-42-Cys-66, Cys-50-Cys-82, and Cys-64-Cys-84.

The protein belongs to the DEFL family.

It is found in the secreted. This chain is Putative defensin-like protein 228 (SCRL3), found in Arabidopsis thaliana (Mouse-ear cress).